The primary structure comprises 739 residues: Phosphoribosylformylglycinamidine synthase subunit PurL (739 aa).

His-53 is an active-site residue. Residues Tyr-56 and Lys-95 each coordinate ATP. Residue Glu-97 participates in Mg(2+) binding. Substrate contacts are provided by residues 98–101 (SHNH) and Arg-120. The active-site Proton acceptor is the His-99. Asp-121 lines the Mg(2+) pocket. Gln-244 contacts substrate. Asp-274 serves as a coordination point for Mg(2+). 318-320 (ESQ) is a binding site for substrate. The ATP site is built by Asp-501 and Gly-538. Asn-539 contacts Mg(2+). Residue Ser-541 coordinates substrate.

This sequence belongs to the FGAMS family. Monomer. Part of the FGAM synthase complex composed of 1 PurL, 1 PurQ and 2 PurS subunits.

It localises to the cytoplasm. It catalyses the reaction N(2)-formyl-N(1)-(5-phospho-beta-D-ribosyl)glycinamide + L-glutamine + ATP + H2O = 2-formamido-N(1)-(5-O-phospho-beta-D-ribosyl)acetamidine + L-glutamate + ADP + phosphate + H(+). It participates in purine metabolism; IMP biosynthesis via de novo pathway; 5-amino-1-(5-phospho-D-ribosyl)imidazole from N(2)-formyl-N(1)-(5-phospho-D-ribosyl)glycinamide: step 1/2. In terms of biological role, part of the phosphoribosylformylglycinamidine synthase complex involved in the purines biosynthetic pathway. Catalyzes the ATP-dependent conversion of formylglycinamide ribonucleotide (FGAR) and glutamine to yield formylglycinamidine ribonucleotide (FGAM) and glutamate. The FGAM synthase complex is composed of three subunits. PurQ produces an ammonia molecule by converting glutamine to glutamate. PurL transfers the ammonia molecule to FGAR to form FGAM in an ATP-dependent manner. PurS interacts with PurQ and PurL and is thought to assist in the transfer of the ammonia molecule from PurQ to PurL. The sequence is that of Phosphoribosylformylglycinamidine synthase subunit PurL from Listeria monocytogenes serotype 4a (strain HCC23).